We begin with the raw amino-acid sequence, 484 residues long: Hexokinase-1 (484 aa).

The 441-residue stretch at 25–465 folds into the Hexokinase domain; it reads KTLQDHLDEL…SGVGAALVSA (441 aa). A hexokinase small subdomain region spans residues 79 to 212; it reads DGNEHGSYLA…CNNVRLNAIL (134 aa). 90 to 95 provides a ligand contact to ATP; that stretch reads DLGGTN. Substrate contacts are provided by residues 160-161, 177-178, and 213-214; these read SY, TK, and SD. Positions 213–454 are hexokinase large subdomain; it reads SDTTGTLVAS…SKVVTIPAED (242 aa). Residue Thr237 participates in ATP binding. Substrate is bound by residues Asn240, Glu269, and Glu302. Residues 307 to 308, 344 to 348, and 419 to 423 each bind ATP; these read GC, TSVLS, and SVYNL.

It belongs to the hexokinase family. In terms of assembly, monomer.

It catalyses the reaction a D-hexose + ATP = a D-hexose 6-phosphate + ADP + H(+). The catalysed reaction is D-mannose + ATP = D-mannose 6-phosphate + ADP + H(+). It carries out the reaction D-fructose + ATP = D-fructose 6-phosphate + ADP + H(+). The enzyme catalyses D-glucose + ATP = D-glucose 6-phosphate + ADP + H(+). It functions in the pathway carbohydrate metabolism; hexose metabolism. It participates in carbohydrate degradation; glycolysis; D-glyceraldehyde 3-phosphate and glycerone phosphate from D-glucose: step 1/4. Catalyzes the phosphorylation of hexose (six-carbon sugars) to hexose 6-phosphate. Phosphorylates D-fructose, D-mannose and, to a lower extent, D-glucose. Compared to hxk2, has low affinity for D-glucose. This is Hexokinase-1 from Schizosaccharomyces pombe (strain 972 / ATCC 24843) (Fission yeast).